A 354-amino-acid polypeptide reads, in one-letter code: Inactive ADP-ribosyltransferase arh2 (354 aa).

Belongs to the ADP-ribosylglycohydrolase family. As to expression, expressed in heart (at protein level). A short form is detected in both heart and tadpole tail (at protein level).

Its subcellular location is the cytoplasm. It is found in the myofibril. The protein resides in the sarcomere. Required for myofibril assembly and outgrowth of the cardiac chambers in the developing heart. Appears to be catalytically inactive, showing no activity against O-acetyl-ADP-ribose. In Xenopus laevis (African clawed frog), this protein is Inactive ADP-ribosyltransferase arh2 (adprhl1).